A 359-amino-acid chain; its full sequence is Ribosomal RNA large subunit methyltransferase M (359 aa).

S-adenosyl-L-methionine contacts are provided by residues S186, 219–222, D238, D258, and D275; that span reads CPGG. K304 serves as the catalytic Proton acceptor.

It belongs to the class I-like SAM-binding methyltransferase superfamily. RNA methyltransferase RlmE family. RlmM subfamily. In terms of assembly, monomer.

It is found in the cytoplasm. The catalysed reaction is cytidine(2498) in 23S rRNA + S-adenosyl-L-methionine = 2'-O-methylcytidine(2498) in 23S rRNA + S-adenosyl-L-homocysteine + H(+). In terms of biological role, catalyzes the 2'-O-methylation at nucleotide C2498 in 23S rRNA. The protein is Ribosomal RNA large subunit methyltransferase M of Aliivibrio fischeri (strain MJ11) (Vibrio fischeri).